Reading from the N-terminus, the 220-residue chain is MSLFGKMFGSGGKGGKSASPQEAIQRLRETEEMLTKKQEFLEKKIEQELVTAKKNGTKNKRAALQALKRKKRYEKQLAQIDGTLSTIEFQREALENAHTNTEVIKNMGYAAKAMKAAHDNMDIDKVDELMQDIIEQQELAQEISDAISKPVGFGEEFDEDELLAELEELEQEELDKNLLEIGDNVPLPNVPSTSLPSRPAKKKEEEDEDDMKDLEAWAAN.

Disordered stretches follow at residues 1–22 and 180–220; these read MSLF…SPQE and EIGD…WAAN. Coiled-coil stretches lie at residues 21–88 and 123–181; these read QEAI…STIE and IDKV…LLEI.

This sequence belongs to the SNF7 family. As to quaternary structure, probable core component of the endosomal sorting required for transport complex III (ESCRT-III). ESCRT-III components are thought to multimerize to form a flat lattice on the perimeter membrane of the endosome.

It is found in the cytoplasm. Its subcellular location is the cytosol. The protein resides in the late endosome membrane. The protein localises to the midbody. Its function is as follows. Probable core component of the endosomal sorting required for transport complex III (ESCRT-III) which is involved in multivesicular bodies (MVBs) formation and sorting of endosomal cargo proteins into MVBs. MVBs contain intraluminal vesicles (ILVs) that are generated by invagination and scission from the limiting membrane of the endosome and mostly are delivered to lysosomes enabling degradation of membrane proteins, such as stimulated growth factor receptors, lysosomal enzymes and lipids. This chain is Charged multivesicular body protein 4b (chmp4b), found in Danio rerio (Zebrafish).